The following is a 235-amino-acid chain: Zinc transporter ZIP9 (235 aa).

Asparagine 2 carries N-linked (GlcNAc...) asparagine glycosylation. The next 4 membrane-spanning stretches (helical) occupy residues 11 to 31 (SCVP…CWWT), 75 to 95 (TTTL…GAAA), 104 to 124 (LIVF…LVSF), and 138 to 158 (HLLV…LGLS). N-linked (GlcNAc...) asparagine glycosylation is present at asparagine 169. A run of 2 helical transmembrane segments spans residues 172-192 (GMAM…HVLP) and 214-234 (LEVA…VGHQ).

Belongs to the ZIP transporter (TC 2.A.5) family.

The protein resides in the golgi apparatus. It localises to the trans-Golgi network membrane. The protein localises to the cell membrane. Its subcellular location is the cytoplasm. It is found in the perinuclear region. The protein resides in the mitochondrion. It localises to the nucleus. It catalyses the reaction Zn(2+)(in) = Zn(2+)(out). Transports zinc ions across cell and organelle membranes into the cytoplasm and regulates intracellular zinc homeostasis. Participates in the zinc ions efflux out of the secretory compartments. Regulates intracellular zinc level, resulting in the enhancement of AKT1 and MAPK3/MAPK1 (Erk1/2) phosphorylation in response to the BCR activation. Also functions as a membrane androgen receptor that mediates, through a G protein, the non-classical androgen signaling pathway, characterized by the activation of MAPK3/MAPK1 (Erk1/2) and transcription factors CREB1 or ATF1. This pathway contributes to CLDN1 and CLDN5 expression and tight junction formation between adjacent Sertoli cells. Mediates androgen-induced vascular endothelial cell proliferation through activation of an inhibitory G protein leading to the AKT1 and MAPK3/MAPK1 (Erk1/2) activation which in turn modulate inhibition (phosphorylation) of GSK3B and CCND1 transcription. Moreover, has dual functions as a membrane-bound androgen receptor and as an androgen-dependent zinc transporter both of which are mediated through an inhibitory G protein (Gi) that mediates both MAP kinase and zinc signaling leading to the androgen-dependent apoptotic process. This chain is Zinc transporter ZIP9, found in Macaca fascicularis (Crab-eating macaque).